A 237-amino-acid chain; its full sequence is N-alpha-acetyltransferase 40 (237 aa).

A lipid anchor (N-myristoyl glycine) is attached at G2. The region spanning 63–216 (SGLEPATVDW…EDCSYEILSR (154 aa)) is the N-acetyltransferase domain. Residues Y85, 127–129 (DVE), and Y138 each bind substrate. Residues 140–142 (VQL) and 148–153 (RKGLGK) contribute to the acetyl-CoA site. T174 contacts substrate. N179 provides a ligand contact to acetyl-CoA. 2 residues coordinate substrate: S197 and Y211.

This sequence belongs to the acetyltransferase family. NAA40 subfamily. As to expression, widely expressed; with the highest expression level in liver and the lowest expression in brain (at protein level).

It localises to the cytoplasm. The protein resides in the nucleus. It catalyses the reaction N-terminal L-seryl-[histone H4] + acetyl-CoA = N-terminal N(alpha)-acetyl-L-seryl-[histone H4] + CoA + H(+). It carries out the reaction N-terminal L-seryl-[histone H2A] + acetyl-CoA = N-terminal N(alpha)-acetyl-L-seryl-[histone H2A] + CoA + H(+). Functionally, N-alpha-acetyltransferase that specifically mediates the acetylation of the N-terminal residues of histones H4 and H2A. In contrast to other N-alpha-acetyltransferase, has a very specific selectivity for histones H4 and H2A N-terminus and specifically recognizes the 'Ser-Gly-Arg-Gly sequence'. Acts as a negative regulator of apoptosis. May play a role in hepatic lipid metabolism. This chain is N-alpha-acetyltransferase 40, found in Homo sapiens (Human).